A 219-amino-acid polypeptide reads, in one-letter code: VQ motif-containing protein 19 (219 aa).

The VQ signature appears at 47 to 56 (FKQVVQMLTG). Residues 52–94 (QMLTGSSSPRSPDSPRPPTTPSGKGNFVIPPIKTAQPKKHSGN) form a disordered region. Phosphoserine is present on residues S59, S65, S127, S131, S139, S141, and S152. Position 155 is a phosphothreonine (T155). Disordered regions lie at residues 156 to 177 (PLKQ…PLSE) and 190 to 219 (HRSP…SPEM). S192 and S195 each carry phosphoserine. Phosphothreonine is present on residues T196 and T211. Phosphoserine is present on residues S212 and S216.

In terms of processing, phosphorylated on serine and threonine residues by MPK6.

The protein localises to the nucleus. Functionally, may modulate WRKY transcription factor activities. The protein is VQ motif-containing protein 19 of Arabidopsis thaliana (Mouse-ear cress).